Reading from the N-terminus, the 315-residue chain is Gamma-hemolysin component C (315 aa).

An N-terminal signal peptide occupies residues 1–29 (MLKNKILTTTLSVSLLAPLANPLLENAKA).

It belongs to the aerolysin family. Toxicity requires sequential binding and synergistic association of a class S and a class F component which form heterooligomeric complexes. HlgC (class S) associates with HlgB (class F) thus forming an CB toxin.

In terms of biological role, toxin that seems to act by forming pores in the membrane of the cell. Has a hemolytic and a leucotoxic activity. This chain is Gamma-hemolysin component C (hlgC), found in Staphylococcus aureus (strain COL).